The sequence spans 856 residues: MDAQYTPHAIESAAQTFWDKNQCFKAVEDATREKFYCLSMFPYPSGKLHMGHVRNYTIGDVVSRFQRMQGKNVLQPMGWDAFGMPAENAAIKNRVPPGAWTYDNIDAMRRQLKALGFAYDWNREFATCDVDYYRWEQWFFTKLVEKGLVYKKMSTVNWDPVDQTVLANEQVIEGRGWRSGALVERKEIPLWFLKITDYADELLADLDKVDWPEQVKTMQRNWIGKSTGVELSFAVADSSEQLEVYTTRPDTLYGVTYVAVAAGHPLARQAAQDNPALGDFLEECQQGGNSEAELATMEKKGMDTGHKAIHPLTGREVPIFVANFVLMEYGTGAVMAVPAHDQRDWEFATKYGIPIEPVIADAEGNTPDLSQGAHTEHGKLINSGEFDGLEFDAAFDAIAARLEANGQGTVKTNFRLRDWGVARQRYWGAPIPVKYGPEGQTVPLTDDELPVALPMEVEVDASGSPLKKMPAFYDLGEGWTRETDTFDTFMESSWYYARFASADNMEAMLDERADYWLPVDLYIGGIEHAILHLLYARFFHKLMRDFGLVASDEPFQRLLTQGMVIAETFYRANDDGSKDWFNPADVDVQRDDKGRPVSAILREDGQPVEMGGIEKMSKSKNNGVDPQAMIDRFGADTVRLFMMFAAPPEQSLEWSDSGVEGAHRFLKRLWKLVADHLDAGTPAALDADALNDDQKTLRRKTHETIAKASDDIGRRTTFNTAIAAVMELVNAIGRFEDTSPQGLAVTREALEACVLVLAPIVPHACHALWDALGHDTPVIDAAWPQADEAAMVKDSVELAVQVNGKLRARLDVPAAADKAAIEAQALEAENVRRHTEGKTIRKVIVVPGKLVNIVAN.

Residues Pro-42–His-52 carry the 'HIGH' region motif. A 'KMSKS' region motif is present at residues Lys-615–Ser-619. Lys-618 is a binding site for ATP.

Belongs to the class-I aminoacyl-tRNA synthetase family.

It is found in the cytoplasm. It carries out the reaction tRNA(Leu) + L-leucine + ATP = L-leucyl-tRNA(Leu) + AMP + diphosphate. This chain is Leucine--tRNA ligase, found in Chromohalobacter salexigens (strain ATCC BAA-138 / DSM 3043 / CIP 106854 / NCIMB 13768 / 1H11).